The chain runs to 152 residues: Protein-export protein SecB (152 aa).

This sequence belongs to the SecB family. As to quaternary structure, homotetramer, a dimer of dimers. One homotetramer interacts with 1 SecA dimer.

The protein localises to the cytoplasm. Functionally, one of the proteins required for the normal export of preproteins out of the cell cytoplasm. It is a molecular chaperone that binds to a subset of precursor proteins, maintaining them in a translocation-competent state. It also specifically binds to its receptor SecA. This Rickettsia conorii (strain ATCC VR-613 / Malish 7) protein is Protein-export protein SecB.